A 40-amino-acid polypeptide reads, in one-letter code: Beta/delta-ctenitoxin-Pr1a (40 aa).

Disulfide bonds link cysteine 1–cysteine 15, cysteine 8–cysteine 21, cysteine 14–cysteine 31, and cysteine 23–cysteine 29.

It belongs to the neurotoxin 03 (Tx2) family. 05 subfamily. In terms of tissue distribution, expressed by the venom gland.

It localises to the secreted. Its function is as follows. Potent insecticidal toxin that binds to two distinct sites in insect sodium channels, with close affinity (Kd1=34.7 pM and Kd2=35.1 pM). Its association is rather fast (1.4 and 8.5 minutes, respectively for sites 1 and 2) and its dissociation is a slower process (5.4 and 32.8 minutes, respectively). On rat brain synaptosomes the toxin partially competes (~30%) with the beta-toxin CssIV, but does not compete with the alpha-toxin AaII, nor with the beta-toxin Ts VII. On cockroach nerve cord synaptosomes, the toxin does not compete with the anti-insect toxin LqqIT1, but it competes with the 'alpha-like' toxin BomIV (IC(50)=80 pM). In cockroach neurons, the toxin inhibits the inactivation of sodium channels and it shifts the sodium channel activation to hyperpolarizing potentials. Hence, it behaves like an 'alpha-like' toxin and binds preferentially to site 3 on the insect Nav channel, located on the domain IV. The toxin may also inhibit the N-methyl-D-aspartate (NMDA)-subtype of ionotropic glutamate receptor (GRIN). In vivo, the toxin causes excitatory effects on insects. In Phoneutria reidyi (Brazilian Amazonian armed spider), this protein is Beta/delta-ctenitoxin-Pr1a.